Here is a 145-residue protein sequence, read N- to C-terminus: Large ribosomal subunit protein uL13 (145 aa).

This sequence belongs to the universal ribosomal protein uL13 family. As to quaternary structure, part of the 50S ribosomal subunit.

Functionally, this protein is one of the early assembly proteins of the 50S ribosomal subunit, although it is not seen to bind rRNA by itself. It is important during the early stages of 50S assembly. The sequence is that of Large ribosomal subunit protein uL13 from Haloquadratum walsbyi (strain DSM 16790 / HBSQ001).